The chain runs to 68 residues: MKCHRCGSDNVRKMVDSPVGDAWEVYVCEKCCYSWRSTENPVVMEKFKLDDNKIANMGVIPPIPPLKK.

Involved in the non-oxidative decarboxylation and detoxification of phenolic derivatives under anaerobic conditions, however the precise biochemical function of ShdD in metabolism of phenolic acid is unknown. The polypeptide is Protein ShdD (Sedimentibacter hydroxybenzoicus (Clostridium hydroxybenzoicum)).